The chain runs to 322 residues: Aspartate--ammonia ligase (322 aa).

Belongs to the class-II aminoacyl-tRNA synthetase family. AsnA subfamily.

Its subcellular location is the cytoplasm. The enzyme catalyses L-aspartate + NH4(+) + ATP = L-asparagine + AMP + diphosphate + H(+). It functions in the pathway amino-acid biosynthesis; L-asparagine biosynthesis; L-asparagine from L-aspartate (ammonia route): step 1/1. The chain is Aspartate--ammonia ligase from Lactiplantibacillus plantarum (strain ATCC BAA-793 / NCIMB 8826 / WCFS1) (Lactobacillus plantarum).